Here is a 278-residue protein sequence, read N- to C-terminus: HTH-type transcriptional activator RhaS (278 aa).

Positions 174–272 (NLLLAWLEDH…NWSPRDIRQG (99 aa)) constitute an HTH araC/xylS-type domain. 2 consecutive DNA-binding regions (H-T-H motif) follow at residues 191 to 212 (DAVADQFSLSLRTLHRQLKQKT) and 239 to 262 (VTDIAYRCGFSDSNHFSTLFRREF).

Binds DNA as a dimer.

It localises to the cytoplasm. Its function is as follows. Activates expression of the rhaBAD and rhaT operons. The polypeptide is HTH-type transcriptional activator RhaS (Escherichia coli O45:K1 (strain S88 / ExPEC)).